Reading from the N-terminus, the 251-residue chain is Chloride intracellular channel protein 5 (251 aa).

The segment at 1 to 98 is required for insertion into the membrane; it reads MTDSATANGD…EEFLEETLTP (98 aa). Residues 32–35 carry the G-site motif; sequence CPFS. A helical transmembrane segment spans residues 34–54; it reads FSQRLFMILWLKGVVFNVTTV. In terms of domain architecture, GST C-terminal spans 101 to 241; it reads YPKLAARHRE…AADSEIELAY (141 aa).

The protein belongs to the chloride channel CLIC family. As to quaternary structure, component of a multimeric complex consisting of several cytoskeletal proteins, including actin, ezrin, alpha-actinin, gelsolin, and IQGAP1. Interacts with AKAP9. Interacts with TPRN. TPRN, CLIC5 and PTPQR form concentric rings at the base of stereocilia and may form a complex. Interacts with EZR, MYO6 and RDX; the proteins may work together as a complex to stabilize linkages between the plasma membrane and subjacent actin cytoskeleton at the stereocilium base. In terms of tissue distribution, detected in cochlea, in cochlear and vestibular hair cell bundles in the organ of Corti (at protein level). Expressed neonatal and adult cardiomyocytes (at protein level).

It is found in the golgi apparatus. It localises to the cytoplasm. Its subcellular location is the cytoskeleton. The protein localises to the microtubule organizing center. The protein resides in the centrosome. It is found in the cell cortex. It localises to the membrane. Its subcellular location is the apical cell membrane. The protein localises to the mitochondrion. The protein resides in the cell projection. It is found in the stereocilium. It carries out the reaction Na(+)(in) = Na(+)(out). It catalyses the reaction K(+)(in) = K(+)(out). The catalysed reaction is chloride(in) = chloride(out). With respect to regulation, inhibited by F-actin. Functionally, in the soluble state, catalyzes glutaredoxin-like thiol disulfide exchange reactions with reduced glutathione as electron donor. Can insert into membranes and form non-selective ion channels almost equally permeable to Na(+), K(+) and Cl(-). Required for normal hearing. It is necessary for the formation of stereocilia in the inner ear and normal development of the organ of Corti. May play a role in the regulation of transepithelial ion absorption and secretion. Is required for the development and/or maintenance of the proper glomerular endothelial cell and podocyte architecture. Plays a role in formation of the lens suture in the eye, which is important for normal optical properties of the lens. The chain is Chloride intracellular channel protein 5 (Clic5) from Rattus norvegicus (Rat).